The sequence spans 342 residues: Cystein proteinase inhibitor protein salarin (342 aa).

The first 19 residues, 1–19, serve as a signal peptide directing secretion; that stretch reads MKSLVLLLLVAVTVSSVVS. N-linked (GlcNAc) asparagine glycosylation occurs at N153. T184 carries O-linked (GlcNAc) threonine glycosylation.

In terms of processing, N-glycosylated, with sialylated biantennary complex-type glycans. Post-translationally, O-glycosylated, with sialylated oligosaccharides. Expressed in the skin, liver. intestine, spleen, pancreas and kidney.

The protein localises to the cytoplasm. The protein resides in the vacuole. In terms of biological role, inhibits papain and ficin (cysteine proteinases) but not trypsin (a serine proteinase). This is Cystein proteinase inhibitor protein salarin (salarin) from Salmo salar (Atlantic salmon).